The chain runs to 155 residues: Small ribosomal subunit protein uS7cz/uS7cy (155 aa).

Belongs to the universal ribosomal protein uS7 family. Part of the 30S ribosomal subunit.

Its subcellular location is the plastid. It localises to the chloroplast. Its function is as follows. One of the primary rRNA binding proteins, it binds directly to 16S rRNA where it nucleates assembly of the head domain of the 30S subunit. The chain is Small ribosomal subunit protein uS7cz/uS7cy (rps7-A) from Vitis vinifera (Grape).